Reading from the N-terminus, the 108-residue chain is U-scoloptoxin(10)-Sm1a (108 aa).

Positions 1 to 24 (MNKQWLHFFSVLLLCYVIEETCSL) are cleaved as a signal peptide.

The protein belongs to the scoloptoxin-10 family. Contains 3 disulfide bonds. In terms of tissue distribution, expressed by the venom gland.

Its subcellular location is the secreted. The polypeptide is U-scoloptoxin(10)-Sm1a (Scolopendra morsitans (Tanzanian blue ringleg centipede)).